A 159-amino-acid chain; its full sequence is Phosphopantetheine adenylyltransferase (159 aa).

Substrate is bound at residue threonine 10. Residues 10–11 (TF) and histidine 18 contribute to the ATP site. Lysine 42, leucine 74, and arginine 88 together coordinate substrate. Residues 89–91 (GLR), glutamate 99, and 124–130 (YSFISSS) contribute to the ATP site.

This sequence belongs to the bacterial CoaD family. Homohexamer. The cofactor is Mg(2+).

It is found in the cytoplasm. The catalysed reaction is (R)-4'-phosphopantetheine + ATP + H(+) = 3'-dephospho-CoA + diphosphate. It functions in the pathway cofactor biosynthesis; coenzyme A biosynthesis; CoA from (R)-pantothenate: step 4/5. Reversibly transfers an adenylyl group from ATP to 4'-phosphopantetheine, yielding dephospho-CoA (dPCoA) and pyrophosphate. This Campylobacter hominis (strain ATCC BAA-381 / DSM 21671 / CCUG 45161 / LMG 19568 / NCTC 13146 / CH001A) protein is Phosphopantetheine adenylyltransferase.